A 319-amino-acid polypeptide reads, in one-letter code: Transaldolase (319 aa).

The active-site Schiff-base intermediate with substrate is the K125.

This sequence belongs to the transaldolase family. Type 1 subfamily. As to quaternary structure, homodimer.

It is found in the cytoplasm. It catalyses the reaction D-sedoheptulose 7-phosphate + D-glyceraldehyde 3-phosphate = D-erythrose 4-phosphate + beta-D-fructose 6-phosphate. Its pathway is carbohydrate degradation; pentose phosphate pathway; D-glyceraldehyde 3-phosphate and beta-D-fructose 6-phosphate from D-ribose 5-phosphate and D-xylulose 5-phosphate (non-oxidative stage): step 2/3. In terms of biological role, transaldolase is important for the balance of metabolites in the pentose-phosphate pathway. In Ralstonia pickettii (strain 12J), this protein is Transaldolase.